Here is a 406-residue protein sequence, read N- to C-terminus: Endo-xylogalacturonan hydrolase A (406 aa).

The signal sequence occupies residues M1 to A18. PbH1 repeat units follow at residues A183–E213, S214–S257, V266–P289, V299–S320, and P333–G375. The Proton donor role is filled by D228. Residue H251 is part of the active site. N278 and N301 each carry an N-linked (GlcNAc...) asparagine glycan.

Belongs to the glycosyl hydrolase 28 family.

The protein resides in the secreted. In terms of biological role, pectinolytic enzyme involved in the degradation of xylogalacturonan (xga), a galacturonan backbone heavily substituted with xylose, and which is one important component of the hairy regions of pectin. Activity requires a galacturonic acid backbone substituted with xylose. The sequence is that of Endo-xylogalacturonan hydrolase A (xghA) from Aspergillus tubingensis.